The sequence spans 94 residues: MAPLKMLALVILLLGASLQHIHAARGTNVGRECCLKYFKGAIPLRKLKTWYQTSEDCSRDAIVFVTVQNKAICSDPNDKKVKKALKYLQSLERS.

Residues 1–23 form the signal peptide; sequence MAPLKMLALVILLLGASLQHIHA. Intrachain disulfides connect cysteine 33/cysteine 57 and cysteine 34/cysteine 73.

It belongs to the intercrine beta (chemokine CC) family.

It localises to the secreted. In terms of biological role, chemokine, which displays chemotactic activity for T lymphocytes, preferentially Th2 cells, but not monocytes or granulocytes. Therefore plays an important role in a wide range of inflammatory and immunological processes. Acts by binding to CCR4 at T-cell surface. Mediates GM-CSF/CSF2-driven pain and inflammation. In the brain, required to maintain the typical, highly branched morphology of hippocampal microglia under homeostatic conditions. May be important for the appropriate adaptation of microglial morphology and synaptic plasticity to acute lipopolysaccharide (LPS)-induced neuroinflammation. Plays a role in wound healing, mainly by inducing fibroblast migration into the wound. The protein is C-C motif chemokine 17 (CCL17) of Macaca mulatta (Rhesus macaque).